The following is a 605-amino-acid chain: NADH-ubiquinone oxidoreductase chain 5 (605 aa).

A run of 16 helical transmembrane segments spans residues 11–31 (ILIT…LPPI), 49–69 (LSLT…ISSL), 77–97 (LAMS…ALFI), 120–140 (MFLL…NFFP), 141–161 (MLVG…WWHG), 178–198 (LADI…SSLD), 202–222 (FFAT…MAAM), 244–264 (VSAL…LIGM), 273–295 (GFSE…KALL), 302–322 (IIAF…GLNH), 325–345 (LAFM…LCAG), 371–391 (ASCF…TGFF), 408–425 (LWAT…IYSL), 457–477 (LALA…PIYT), 488–508 (LAAL…ISLA), and 584–604 (IKTY…IMLF).

It belongs to the complex I subunit 5 family.

The protein resides in the mitochondrion inner membrane. It carries out the reaction a ubiquinone + NADH + 5 H(+)(in) = a ubiquinol + NAD(+) + 4 H(+)(out). Functionally, core subunit of the mitochondrial membrane respiratory chain NADH dehydrogenase (Complex I) that is believed to belong to the minimal assembly required for catalysis. Complex I functions in the transfer of electrons from NADH to the respiratory chain. The immediate electron acceptor for the enzyme is believed to be ubiquinone. The polypeptide is NADH-ubiquinone oxidoreductase chain 5 (MT-ND5) (Pelomedusa subrufa (African side-necked turtle)).